We begin with the raw amino-acid sequence, 88 residues long: Large ribosomal subunit protein bL27 (88 aa).

Residues 1–21 (MAHKKGQGSTQNNRDSAGRRL) form a disordered region.

Belongs to the bacterial ribosomal protein bL27 family.

The protein is Large ribosomal subunit protein bL27 of Helicobacter pylori (strain P12).